A 334-amino-acid chain; its full sequence is Protein-methionine-sulfoxide reductase catalytic subunit MsrP (334 aa).

A signal peptide (tat-type signal) is located at residues 1 to 44 (MKKNQFLKESDVTAESVFFMKRRQVLKALGISAAAFSLPHAAHA). Mo-molybdopterin-binding positions include Asn88, 91-92 (YE), Cys146, Thr181, Asn233, Arg238, and 249-251 (GIK).

The protein belongs to the MsrP family. In terms of assembly, heterodimer of a catalytic subunit (MsrP) and a heme-binding subunit (MsrQ). It depends on Mo-molybdopterin as a cofactor. In terms of processing, predicted to be exported by the Tat system. The position of the signal peptide cleavage has not been experimentally proven.

It localises to the periplasm. It catalyses the reaction L-methionyl-[protein] + a quinone + H2O = L-methionyl-(S)-S-oxide-[protein] + a quinol. The catalysed reaction is L-methionyl-[protein] + a quinone + H2O = L-methionyl-(R)-S-oxide-[protein] + a quinol. Functionally, part of the MsrPQ system that repairs oxidized periplasmic proteins containing methionine sulfoxide residues (Met-O), using respiratory chain electrons. Thus protects these proteins from oxidative-stress damage caused by reactive species of oxygen and chlorine generated by the host defense mechanisms. MsrPQ is essential for the maintenance of envelope integrity under bleach stress, rescuing a wide series of structurally unrelated periplasmic proteins from methionine oxidation, including the primary periplasmic chaperone SurA and the lipoprotein Pal. The catalytic subunit MsrP is non-stereospecific, being able to reduce both (R-) and (S-) diastereoisomers of methionine sulfoxide. The polypeptide is Protein-methionine-sulfoxide reductase catalytic subunit MsrP (Escherichia coli O7:K1 (strain IAI39 / ExPEC)).